Reading from the N-terminus, the 251-residue chain is Large ribosomal subunit protein uL3 (251 aa).

Disordered regions lie at residues 140-162 and 229-251; these read SHRS…NKKM and AAPA…EENA. At Q151 the chain carries N5-methylglutamine.

Belongs to the universal ribosomal protein uL3 family. As to quaternary structure, part of the 50S ribosomal subunit. Forms a cluster with proteins L14 and L19. In terms of processing, methylated by PrmB.

One of the primary rRNA binding proteins, it binds directly near the 3'-end of the 23S rRNA, where it nucleates assembly of the 50S subunit. This chain is Large ribosomal subunit protein uL3, found in Methylobacterium nodulans (strain LMG 21967 / CNCM I-2342 / ORS 2060).